Consider the following 211-residue polypeptide: Small ribosomal subunit protein uS3 (211 aa).

Residues 38–106 (LRKFIKKAFY…NIELNIIEVK (69 aa)) form the KH type-2 domain.

The protein belongs to the universal ribosomal protein uS3 family. Part of the 30S ribosomal subunit. Forms a tight complex with proteins S10 and S14.

Binds the lower part of the 30S subunit head. Binds mRNA in the 70S ribosome, positioning it for translation. The protein is Small ribosomal subunit protein uS3 of Ehrlichia ruminantium (strain Gardel).